A 78-amino-acid chain; its full sequence is Beta-defensin 29 (78 aa).

Residues 1–23 form the signal peptide; that stretch reads MPVTKPYFVTVAVLLILVDKTTG. Disulfide bonds link Cys-40–Cys-67, Cys-47–Cys-61, and Cys-51–Cys-68.

The protein belongs to the beta-defensin family.

The protein localises to the secreted. Has antibacterial activity. This Rattus norvegicus (Rat) protein is Beta-defensin 29 (Defb29).